The chain runs to 156 residues: Ribosomal RNA large subunit methyltransferase H (156 aa).

Residues Leu72, Gly104, and 123 to 128 (FGKMVW) contribute to the S-adenosyl-L-methionine site.

It belongs to the RNA methyltransferase RlmH family. Homodimer.

It localises to the cytoplasm. The catalysed reaction is pseudouridine(1915) in 23S rRNA + S-adenosyl-L-methionine = N(3)-methylpseudouridine(1915) in 23S rRNA + S-adenosyl-L-homocysteine + H(+). Functionally, specifically methylates the pseudouridine at position 1915 (m3Psi1915) in 23S rRNA. The protein is Ribosomal RNA large subunit methyltransferase H of Ruegeria sp. (strain TM1040) (Silicibacter sp.).